Here is a 313-residue protein sequence, read N- to C-terminus: tRNA-cytidine(32) 2-sulfurtransferase (313 aa).

The PP-loop motif signature appears at 47–52 (SGGKDS). Residues Cys-122, Cys-125, and Cys-213 each contribute to the [4Fe-4S] cluster site. Residues 288-313 (PVGWQPEDDEDTEKRPPVRLDVLEIK) form a disordered region. Residues 299–313 (TEKRPPVRLDVLEIK) are compositionally biased toward basic and acidic residues.

Belongs to the TtcA family. In terms of assembly, homodimer. Requires Mg(2+) as cofactor. [4Fe-4S] cluster is required as a cofactor.

The protein resides in the cytoplasm. The enzyme catalyses cytidine(32) in tRNA + S-sulfanyl-L-cysteinyl-[cysteine desulfurase] + AH2 + ATP = 2-thiocytidine(32) in tRNA + L-cysteinyl-[cysteine desulfurase] + A + AMP + diphosphate + H(+). The protein operates within tRNA modification. In terms of biological role, catalyzes the ATP-dependent 2-thiolation of cytidine in position 32 of tRNA, to form 2-thiocytidine (s(2)C32). The sulfur atoms are provided by the cysteine/cysteine desulfurase (IscS) system. The sequence is that of tRNA-cytidine(32) 2-sulfurtransferase from Yersinia pseudotuberculosis serotype O:1b (strain IP 31758).